The sequence spans 1938 residues: Autophagy-related protein 2 homolog A (1938 aa).

The Chorein N-terminal domain maps to 14–111 (ERVCRYLLHH…QLTLQPRRGP (98 aa)). 7 positions are modified to phosphoserine: S765, S878, S892, S894, S1266, S1301, and S1309. The tract at residues 1242–1272 (DLHPPPRPPSPTEIAGQKLSESPASLPSCPP) is disordered. The interval 1315–1359 (LFPGERSGAPPPSPPVGGPAGSLGSCSEEKEDEREEEGDGDTLDS) is disordered. Positions 1343-1359 (EKEDEREEEGDGDTLDS) are enriched in acidic residues. The WIPI-interacting stretch occupies residues 1358 to 1404 (DSDEFCILDAPGLGIPPRDGEPVVTQLHPGPIVVRDGYFSRPIGSTD). S1402 is subject to Phosphoserine. Disordered stretches follow at residues 1438-1476 (PHPG…GSGR) and 1614-1657 (GETS…PSPP). Residues 1446-1464 (TGLSGPRSSPSRCSGPNRP) are compositionally biased toward low complexity.

The protein belongs to the ATG2 family. As to quaternary structure, interacts with ATG9A (via C-terminus). Interacts (via WIPI-interacting region) with WDR45B/WIPI3. Interacts (via WIPI-interacting region) with WDR45/WIPI4. Interacts with TMEM41B. Interacts with VMP1.

The protein resides in the preautophagosomal structure membrane. The protein localises to the lipid droplet. Its subcellular location is the endoplasmic reticulum membrane. It carries out the reaction a 1,2-diacyl-sn-glycero-3-phospho-L-serine(in) = a 1,2-diacyl-sn-glycero-3-phospho-L-serine(out). It catalyses the reaction a 1,2-diacyl-sn-glycero-3-phosphoethanolamine(in) = a 1,2-diacyl-sn-glycero-3-phosphoethanolamine(out). In terms of biological role, lipid transfer protein involved in autophagosome assembly. Tethers the edge of the isolation membrane (IM) to the endoplasmic reticulum (ER) and mediates direct lipid transfer from ER to IM for IM expansion. Binds to the ER exit site (ERES), which is the membrane source for autophagosome formation, and extracts phospholipids from the membrane source and transfers them to ATG9 (ATG9A or ATG9B) to the IM for membrane expansion. Lipid transfer activity is enhanced by WIPI1 and WDR45/WIPI4, which promote ATG2A-association with phosphatidylinositol 3-monophosphate (PI3P)-containing membranes. Also regulates lipid droplets morphology and distribution within the cell. This is Autophagy-related protein 2 homolog A from Homo sapiens (Human).